The primary structure comprises 272 residues: uncharacterized protein (272 aa).

Active-site residues include Asp-71 and Glu-163.

The protein belongs to the glycosyl hydrolase 25 family.

This is an uncharacterized protein from Escherichia coli O6:H1 (strain CFT073 / ATCC 700928 / UPEC).